Reading from the N-terminus, the 349-residue chain is tRNA pseudouridine synthase D (349 aa).

F27 contributes to the substrate binding site. The active-site Nucleophile is D80. N129 serves as a coordination point for substrate. A TRUD domain is found at G155–L303. F329 contributes to the substrate binding site.

Belongs to the pseudouridine synthase TruD family.

It catalyses the reaction uridine(13) in tRNA = pseudouridine(13) in tRNA. Responsible for synthesis of pseudouridine from uracil-13 in transfer RNAs. The polypeptide is tRNA pseudouridine synthase D (Shigella dysenteriae serotype 1 (strain Sd197)).